A 307-amino-acid chain; its full sequence is UPF0276 protein HI_1600 (307 aa).

Belongs to the UPF0276 family.

In Haemophilus influenzae (strain ATCC 51907 / DSM 11121 / KW20 / Rd), this protein is UPF0276 protein HI_1600.